The primary structure comprises 986 residues: Ankyrin repeat, PH and SEC7 domain containing protein secG (986 aa).

Residues 1–28 (MGSTSNSTKNTGSTTTTTTTAAPATTAK) show a composition bias toward low complexity. The tract at residues 1 to 43 (MGSTSNSTKNTGSTTTTTTTAAPATTAKHSNSAPTRPSVHYYS) is disordered. Residues 29-43 (HSNSAPTRPSVHYYS) show a composition bias toward polar residues. ANK repeat units follow at residues 34–63 (PTRPSVHYYSSTGDIEKLSNLLNNSATSPD), 68–97 (EKRTPLHHAAFCGSAACVNFLLDKKANANI), 101–131 (AGNTPLQWASSRGHLECIKLLVEKGGVDVNT), 135–164 (KNGTPLHKASLFASAECVLYLLNGKADPRA), 168–197 (NGETPLHHASAGGNPQCVELLIKADSKVNA), 201–230 (DCITPLHQASFSGHSSCVSLLLKKGAKVDP), 234–263 (HGISPLHNAASAGYVDCVEQLVRNGENINC), 267–296 (EGVTPLHHTCFNGNLQLTKRLIELGAKINM), 300–329 (MGETPLHKAAFNGHKEVCEYLLYLDPTMID), 334–363 (RQSTSLHLAAFNGLLDMVDLLIRYKAQINI), 367–396 (EGATPLHKASFNGHSSCAKLLVDKGAPICI), 400–429 (QGATPLHKAAFNGRSKCLATLIRSGAELEV), 433–462 (QGGTPLHNAAYNGHSDCCRILLKKGANVNA), 466–495 (HSSTPLHLASAAGARDTVDVLIQFKARIDA), and 499–528 (AGKTPLVYAIKKNHSDVARVLIRAGADLDQ). An SEC7 domain is found at 580-770 (QLAAEKQKLL…ENLYDKIVTN (191 aa)). One can recognise a PH domain in the interval 784-895 (HVEKKGWLTK…WVQSIKSNIH (112 aa)). The segment at 911–986 (IRGRGKVSTK…PVQQQTSALS (76 aa)) is disordered. A compositionally biased stretch (polar residues) spans 920-929 (KPIQNRKQTI). Low complexity-rich tracts occupy residues 936–953 (TTTTTTSTASNNVTSVGS) and 963–986 (SSGSKPVTFSSTSSPVQQQTSALS).

The protein is Ankyrin repeat, PH and SEC7 domain containing protein secG (secG) of Dictyostelium discoideum (Social amoeba).